The chain runs to 441 residues: Platelet-activating factor acetylhydrolase (441 aa).

A signal peptide spans 1–21 (MVPPKLHVLFCLCGCLAVVYP). The active-site Nucleophile is the Ser-273. Residues Asp-296 and His-351 each act as charge relay system in the active site. 2 N-linked (GlcNAc...) asparagine glycosylation sites follow: Asn-423 and Asn-433.

Belongs to the AB hydrolase superfamily. Lipase family. N-glycosylated. Macrophage-derived PLA2G7 carries sialylated complex-type N-glycans that hinder its binding to HDL particles. As to expression, plasma. Secreted by macrophages (at protein level).

The protein localises to the secreted. It localises to the extracellular space. It catalyses the reaction a 1-O-alkyl-2-acetyl-sn-glycero-3-phosphocholine + H2O = a 1-O-alkyl-sn-glycero-3-phosphocholine + acetate + H(+). It carries out the reaction 1-O-decyl-2-acetyl-sn-glycero-3-phosphocholine + H2O = 1-O-decyl-sn-glycero-3-phosphocholine + acetate + H(+). The enzyme catalyses 1-O-dodecyl-2-acetyl-sn-glycero-3-phosphocholine + H2O = 1-O-dodecyl-sn-glycero-3-phosphocholine + acetate + H(+). The catalysed reaction is 1-O-tetradecyl-2-acetyl-sn-glycero-3-phosphocholine + H2O = 1-O-tetradecyl-sn-glycero-3-phosphocholine + acetate + H(+). It catalyses the reaction 1-O-hexadecyl-2-acetyl-sn-glycero-3-phosphocholine + H2O = 1-O-hexadecyl-sn-glycero-3-phosphocholine + acetate + H(+). It carries out the reaction 1-O-octadecyl-2-acetyl-sn-glycero-3-phosphocholine + H2O = 1-O-octadecyl-sn-glycero-3-phosphocholine + acetate + H(+). The enzyme catalyses 1-hexadecanoyl-2-acetyl-sn-glycero-3-phosphocholine + H2O = 1-hexadecanoyl-sn-glycero-3-phosphocholine + acetate + H(+). The catalysed reaction is 1-hexadecanoyl-2-propionyl-sn-glycero-3-phosphocholine + H2O = propanoate + 1-hexadecanoyl-sn-glycero-3-phosphocholine + H(+). It catalyses the reaction 1-hexadecanoyl-2-butanoyl-sn-glycero-3-phosphocholine + H2O = butanoate + 1-hexadecanoyl-sn-glycero-3-phosphocholine + H(+). It carries out the reaction 1-hexadecanoyl-2-pentanoyl-sn-glycero-3-phosphocholine + H2O = pentanoate + 1-hexadecanoyl-sn-glycero-3-phosphocholine + H(+). The enzyme catalyses 1-hexadecanoyl-2-glutaroyl-sn-glycero-3-phosphocholine + H2O = glutarate + 1-hexadecanoyl-sn-glycero-3-phosphocholine + H(+). The catalysed reaction is 1-hexadecanoyl-2-(5-oxopentanoyl)-sn-glycero-3-phosphocholine + H2O = 5-oxopentanoate + 1-hexadecanoyl-sn-glycero-3-phosphocholine + H(+). It catalyses the reaction 1-hexadecanoyl-2-(9-oxononanoyl)-sn-glycero-3-phosphocholine + H2O = 9-oxononanoate + 1-hexadecanoyl-sn-glycero-3-phosphocholine + H(+). It carries out the reaction 1-hexadecanoyl-2-[9-hydroperoxy-(10E-octadecenoyl)]-sn-glycero-3-phosphocholine + H2O = 9-hydroperoxy-10E-octadecenoate + 1-hexadecanoyl-sn-glycero-3-phosphocholine + H(+). The enzyme catalyses 1-hexadecanoyl-2-(10-hydroperoxy-8E-octadecenoyl)-sn-glycero-3-phosphocholine + H2O = 10-hydroperoxy-(8E)-octadecenoate + 1-hexadecanoyl-sn-glycero-3-phosphocholine + H(+). Its function is as follows. Lipoprotein-associated calcium-independent phospholipase A2 involved in phospholipid catabolism during inflammatory and oxidative stress response. At the lipid-aqueous interface, hydrolyzes the ester bond of fatty acyl group attached at sn-2 position of phospholipids (phospholipase A2 activity). Specifically targets phospholipids with a short-chain fatty acyl group at sn-2 position. Can hydrolyze phospholipids with long fatty acyl chains, only if they carry oxidized functional groups. Hydrolyzes and inactivates platelet-activating factor (PAF, 1-O-alkyl-2-acetyl-sn-glycero-3-phosphocholine), a potent pro-inflammatory signaling lipid that acts through PTAFR on various innate immune cells. Hydrolyzes oxidatively truncated phospholipids carrying an aldehyde group at omega position, preventing their accumulation in low-density lipoprotein (LDL) particles and uncontrolled pro-inflammatory effects. As part of high-density lipoprotein (HDL) particles, can hydrolyze phospholipids having long-chain fatty acyl hydroperoxides at sn-2 position and protect against potential accumulation of these oxylipins in the vascular wall. Catalyzes the release from membrane phospholipids of F2-isoprostanes, lipid biomarkers of cellular oxidative damage. This chain is Platelet-activating factor acetylhydrolase (PLA2G7), found in Homo sapiens (Human).